The following is a 188-amino-acid chain: uncharacterized protein (188 aa).

This is an uncharacterized protein from Autographa californica nuclear polyhedrosis virus (AcMNPV).